The sequence spans 224 residues: Endonuclease NucS (224 aa).

The protein belongs to the NucS endonuclease family.

Its subcellular location is the cytoplasm. Its function is as follows. Cleaves both 3' and 5' ssDNA extremities of branched DNA structures. The chain is Endonuclease NucS from Mycolicibacterium smegmatis (strain ATCC 700084 / mc(2)155) (Mycobacterium smegmatis).